Consider the following 421-residue polypeptide: Flap endonuclease 1 (421 aa).

The segment at Met-1–Arg-109 is N-domain. Asp-34 contributes to the Mg(2+) binding site. Positions 47 and 75 each coordinate DNA. Mg(2+) contacts are provided by Asp-91, Glu-163, Glu-165, Asp-184, and Asp-186. The tract at residues Glu-127–His-258 is I-domain. DNA is bound at residue Glu-163. Positions 236 and 238 each coordinate DNA. Asp-238 contacts Mg(2+). Residues Lys-284 to Asn-307 form a disordered region. A compositionally biased stretch (acidic residues) spans Gln-289 to Val-298. The interaction with PCNA stretch occupies residues Pro-379–Phe-387. Positions Ser-398–His-421 are disordered.

Belongs to the XPG/RAD2 endonuclease family. FEN1 subfamily. As to quaternary structure, interacts with PCNA. Three molecules of FEN1 bind to one PCNA trimer with each molecule binding to one PCNA monomer. PCNA stimulates the nuclease activity without altering cleavage specificity. The cofactor is Mg(2+). Post-translationally, phosphorylated. Phosphorylation upon DNA damage induces relocalization to the nuclear plasma.

The protein localises to the nucleus. It localises to the nucleolus. Its subcellular location is the nucleoplasm. The protein resides in the mitochondrion. Structure-specific nuclease with 5'-flap endonuclease and 5'-3' exonuclease activities involved in DNA replication and repair. During DNA replication, cleaves the 5'-overhanging flap structure that is generated by displacement synthesis when DNA polymerase encounters the 5'-end of a downstream Okazaki fragment. It enters the flap from the 5'-end and then tracks to cleave the flap base, leaving a nick for ligation. Also involved in the long patch base excision repair (LP-BER) pathway, by cleaving within the apurinic/apyrimidinic (AP) site-terminated flap. Acts as a genome stabilization factor that prevents flaps from equilibrating into structures that lead to duplications and deletions. Also possesses 5'-3' exonuclease activity on nicked or gapped double-stranded DNA, and exhibits RNase H activity. Also involved in replication and repair of rDNA and in repairing mitochondrial DNA. This is Flap endonuclease 1 from Phaeodactylum tricornutum (strain CCAP 1055/1).